We begin with the raw amino-acid sequence, 38 residues long: Photosystem II reaction center protein L (38 aa).

The helical transmembrane segment at 17–37 threads the bilayer; that stretch reads SLYWGLLLIFVLAVLFSNYFF.

Belongs to the PsbL family. PSII is composed of 1 copy each of membrane proteins PsbA, PsbB, PsbC, PsbD, PsbE, PsbF, PsbH, PsbI, PsbJ, PsbK, PsbL, PsbM, PsbT, PsbX, PsbY, PsbZ, Psb30/Ycf12, at least 3 peripheral proteins of the oxygen-evolving complex and a large number of cofactors. It forms dimeric complexes.

The protein resides in the plastid. The protein localises to the chloroplast thylakoid membrane. In terms of biological role, one of the components of the core complex of photosystem II (PSII). PSII is a light-driven water:plastoquinone oxidoreductase that uses light energy to abstract electrons from H(2)O, generating O(2) and a proton gradient subsequently used for ATP formation. It consists of a core antenna complex that captures photons, and an electron transfer chain that converts photonic excitation into a charge separation. This subunit is found at the monomer-monomer interface and is required for correct PSII assembly and/or dimerization. The protein is Photosystem II reaction center protein L of Oenothera argillicola (Appalachian evening primrose).